We begin with the raw amino-acid sequence, 543 residues long: Malate synthase (543 aa).

The protein belongs to the malate synthase family. As to quaternary structure, homodimer.

It localises to the cytoplasm. The enzyme catalyses glyoxylate + acetyl-CoA + H2O = (S)-malate + CoA + H(+). Its pathway is carbohydrate metabolism; glyoxylate cycle; (S)-malate from isocitrate: step 2/2. In Streptomyces arenae, this protein is Malate synthase (aceB).